Reading from the N-terminus, the 513-residue chain is Xylose import ATP-binding protein XylG (513 aa).

ABC transporter domains follow at residues 5–242 (LEMK…VGRE) and 259–505 (LRIE…LRSE). 37–44 (GENGSGKS) lines the ATP pocket.

The protein belongs to the ABC transporter superfamily. Xylose importer (TC 3.A.1.2.4) family. As to quaternary structure, the complex is composed of two ATP-binding proteins (XylG), two transmembrane proteins (XylH) and a solute-binding protein (XylF).

It localises to the cell inner membrane. The enzyme catalyses D-xylose(out) + ATP + H2O = D-xylose(in) + ADP + phosphate + H(+). Part of the ABC transporter complex XylFGH involved in xylose import. Responsible for energy coupling to the transport system. In Shigella boydii serotype 4 (strain Sb227), this protein is Xylose import ATP-binding protein XylG.